Reading from the N-terminus, the 300-residue chain is uncharacterized protein (300 aa).

Residue serine 49 is the Charge relay system of the active site. The active-site Proton donor is the tyrosine 137. Residue lysine 165 is the Schiff-base intermediate with substrate of the active site.

This sequence belongs to the DapA family. In terms of assembly, homotetramer.

The protein localises to the cytoplasm. Its function is as follows. Upon expression in E.coli complements a dapA deletion mutation, but this may not be its physiological function. This is an uncharacterized protein from Rhizobium meliloti (Ensifer meliloti).